The following is a 209-amino-acid chain: Ribosomal RNA large subunit methyltransferase E (209 aa).

S-adenosyl-L-methionine is bound by residues Gly63, Trp65, Asp83, Asp99, and Asp124. Lys164 functions as the Proton acceptor in the catalytic mechanism.

This sequence belongs to the class I-like SAM-binding methyltransferase superfamily. RNA methyltransferase RlmE family.

The protein localises to the cytoplasm. It catalyses the reaction uridine(2552) in 23S rRNA + S-adenosyl-L-methionine = 2'-O-methyluridine(2552) in 23S rRNA + S-adenosyl-L-homocysteine + H(+). Specifically methylates the uridine in position 2552 of 23S rRNA at the 2'-O position of the ribose in the fully assembled 50S ribosomal subunit. The chain is Ribosomal RNA large subunit methyltransferase E from Shewanella pealeana (strain ATCC 700345 / ANG-SQ1).